The sequence spans 113 residues: Putative pterin-4-alpha-carbinolamine dehydratase (113 aa).

This sequence belongs to the pterin-4-alpha-carbinolamine dehydratase family.

The enzyme catalyses (4aS,6R)-4a-hydroxy-L-erythro-5,6,7,8-tetrahydrobiopterin = (6R)-L-erythro-6,7-dihydrobiopterin + H2O. This Nitrosospira multiformis (strain ATCC 25196 / NCIMB 11849 / C 71) protein is Putative pterin-4-alpha-carbinolamine dehydratase.